The following is a 218-amino-acid chain: MYSLVFVILMCIPFSFQTVYDDKSVCDSDNKEYMGIEVYVEATLDEPLRQTTCESEIHKYGASVSNGGLNISVDLLNCFLNFHTVGVYTNRDTVYAKFTSLDPWTMEPINSMTYDDLVKLTEECIVDIYLKCEVDKTKDFIKTNGNRLKPRDFKTVPPNVGSIIELQSDYCVNDVTAYVKIYDECGNIKQHSIPTLRDYFTTTNGQPRKILKKKFDNC.

The first 16 residues, 1 to 16 (MYSLVFVILMCIPFSF), serve as a signal peptide directing secretion. An N-linked (GlcNAc...) asparagine; by host glycan is attached at Asn70.

The protein belongs to the orthopoxvirus OPG170 family.

The protein localises to the secreted. May interact with several cellular chemokines to interfere with chemokine-glycosaminoglycan (GAG) interactions at the cell surface to alter chemotaxis of nearby responsive cells. This Homo sapiens (Human) protein is Protein OPG170 (OPG170).